Here is a 184-residue protein sequence, read N- to C-terminus: Probable gluconokinase (184 aa).

11 to 18 is an ATP binding site; that stretch reads GVSGSGKS.

Belongs to the gluconokinase GntK/GntV family.

It carries out the reaction D-gluconate + ATP = 6-phospho-D-gluconate + ADP + H(+). Its pathway is carbohydrate acid metabolism; D-gluconate degradation. The protein is Probable gluconokinase (Idnk) of Mus musculus (Mouse).